The primary structure comprises 563 residues: Chitinase A (563 aa).

The first 23 residues, 1–23 (MRKFNKPLLALLIGSTLCSAAQA), serve as a signal peptide directing secretion. A GH18 domain is found at 158–559 (KVVGSYFVEW…NSMNASLGNS (402 aa)). Glutamate 315 acts as the Proton donor in catalysis.

The protein belongs to the glycosyl hydrolase 18 family. Chitinase class II subfamily.

The enzyme catalyses Random endo-hydrolysis of N-acetyl-beta-D-glucosaminide (1-&gt;4)-beta-linkages in chitin and chitodextrins.. The protein is Chitinase A (chiA) of Serratia marcescens.